The sequence spans 201 residues: dTTP/UTP pyrophosphatase (201 aa).

The active-site Proton acceptor is D79.

It belongs to the Maf family. YhdE subfamily. A divalent metal cation is required as a cofactor.

The protein resides in the cytoplasm. The enzyme catalyses dTTP + H2O = dTMP + diphosphate + H(+). It carries out the reaction UTP + H2O = UMP + diphosphate + H(+). Functionally, nucleoside triphosphate pyrophosphatase that hydrolyzes dTTP and UTP. May have a dual role in cell division arrest and in preventing the incorporation of modified nucleotides into cellular nucleic acids. The protein is dTTP/UTP pyrophosphatase of Hahella chejuensis (strain KCTC 2396).